The sequence spans 279 residues: Methyltransferase prhM (279 aa).

S-adenosyl-L-methionine-binding positions include 124-125 and 152-153; these read DI and DV.

This sequence belongs to the class I-like SAM-binding methyltransferase superfamily.

It participates in secondary metabolite biosynthesis; terpenoid biosynthesis. Its function is as follows. Methyltransferase; part of the gene cluster that mediates the biosynthesis of paraherquonin, a meroterpenoid with a unique, highly congested hexacyclic molecular architecture. The first step of the pathway is the synthesis of 3,5-dimethylorsellinic acid (DMOA) by the polyketide synthase prhL. Synthesis of DMOA is followed by farnesylation by the prenyltransferase prhE, methylesterification by the methyl-transferase prhM, epoxidation of the prenyl chain by the flavin-dependent monooxygenase prhF, and cyclization of the farnesyl moiety by the terpene cyclase prhH, to yield the tetracyclic intermediate, protoaustinoid A. The short chain dehydrogenase prhI then oxidizes the C-3 alcohol group of the terpene cyclase product to transform protoaustinoid A into protoaustinoid B. The FAD-binding monooxygenase prhJ catalyzes the oxidation of protoaustinoid B into preaustinoid A which is further oxidized into preaustinoid A1 by FAD-binding monooxygenase phrK. Finally, prhA leads to berkeleydione via the berkeleyone B intermediate. PrhA is a multifunctional dioxygenase that first desaturates at C5-C6 to form berkeleyone B, followed by rearrangement of the A/B-ring to form the cycloheptadiene moiety in berkeleydione. Berkeleydione serves as the key intermediate for the biosynthesis of paraherquonin as well as many other meroterpenoids. The cytochrome P450 monooxygenases prhB, prhD, and prhN, as well as the isomerase prhC, are probably involved in the late stage of paraherquonin biosynthesis, after the production of berkeleydione. Especially prhC might be a multifunctional enzyme that catalyzes the D-ring expansion via intramolecular methoxy rearrangement, as well as the hydrolysis of the expanded D-ring. The polypeptide is Methyltransferase prhM (Penicillium brasilianum).